The sequence spans 96 residues: Large ribosomal subunit protein bL21 (96 aa).

Basic residues predominate over residues lysine 73–histidine 84. The tract at residues lysine 73–leucine 96 is disordered. Residues arginine 85 to leucine 96 show a composition bias toward polar residues.

This sequence belongs to the bacterial ribosomal protein bL21 family. As to quaternary structure, part of the 50S ribosomal subunit. Contacts protein L20.

Its function is as follows. This protein binds to 23S rRNA in the presence of protein L20. In Chlorobium phaeovibrioides (strain DSM 265 / 1930) (Prosthecochloris vibrioformis (strain DSM 265)), this protein is Large ribosomal subunit protein bL21.